Consider the following 116-residue polypeptide: Large ribosomal subunit protein bL19 (116 aa).

It belongs to the bacterial ribosomal protein bL19 family.

This protein is located at the 30S-50S ribosomal subunit interface and may play a role in the structure and function of the aminoacyl-tRNA binding site. This Nocardioides sp. (strain ATCC BAA-499 / JS614) protein is Large ribosomal subunit protein bL19.